Reading from the N-terminus, the 191-residue chain is Peptidyl-tRNA hydrolase (191 aa).

A tRNA-binding site is contributed by Tyr15. Catalysis depends on His20, which acts as the Proton acceptor. Positions 66, 68, and 114 each coordinate tRNA.

Belongs to the PTH family. As to quaternary structure, monomer.

It is found in the cytoplasm. It catalyses the reaction an N-acyl-L-alpha-aminoacyl-tRNA + H2O = an N-acyl-L-amino acid + a tRNA + H(+). Hydrolyzes ribosome-free peptidyl-tRNAs (with 1 or more amino acids incorporated), which drop off the ribosome during protein synthesis, or as a result of ribosome stalling. Its function is as follows. Catalyzes the release of premature peptidyl moieties from peptidyl-tRNA molecules trapped in stalled 50S ribosomal subunits, and thus maintains levels of free tRNAs and 50S ribosomes. This Streptococcus agalactiae serotype III (strain NEM316) protein is Peptidyl-tRNA hydrolase.